The following is a 189-amino-acid chain: Recombination protein RecR (189 aa).

The C4-type zinc finger occupies 48-63 (CQTCFHLSAEPTCEIC). Residues 71–165 (GMLCVVADSR…EVSRIAYGLP (95 aa)) form the Toprim domain.

It belongs to the RecR family.

Its function is as follows. May play a role in DNA repair. It seems to be involved in an RecBC-independent recombinational process of DNA repair. It may act with RecF and RecO. The polypeptide is Recombination protein RecR (Synechococcus sp. (strain CC9311)).